A 783-amino-acid polypeptide reads, in one-letter code: Cation/H(+) antiporter 10 (783 aa).

12 helical membrane passes run 31–51, 61–81, 100–120, 135–155, 175–195, 206–226, 244–264, 276–295, 300–322, 356–376, 389–409, and 418–438; these read VVFG…FFCI, IGIS…PQLF, IAAL…LMTV, VVIG…QNFF, AIVI…LLEL, ALSA…VASI, AVII…QWVI, MYIH…FVFF, ILGP…ALEA, IFFN…ACLA, LAVS…YEAV, and ATYS…PTVL.

This sequence belongs to the monovalent cation:proton antiporter 2 (CPA2) transporter (TC 2.A.37) family. CHX (TC 2.A.37.4) subfamily. In terms of tissue distribution, specifically expressed in pollen.

The protein resides in the membrane. In terms of biological role, may operate as a cation/H(+) antiporter. The sequence is that of Cation/H(+) antiporter 10 (CHX10) from Arabidopsis thaliana (Mouse-ear cress).